The following is a 179-amino-acid chain: Interferon lambda-4 (179 aa).

A signal peptide spans 1–21 (MRPSVWAAVAAGLWVLCTVIA). The segment at 130–149 (SSRKVPGAQKRRHKPRRADS) is disordered.

The protein belongs to the lambda interferon family.

It is found in the cytoplasm. The protein resides in the secreted. In terms of biological role, cytokine that may trigger an antiviral response activating the JAK-STAT pathway and up-regulating specifically some interferon-stimulated genes. In Homo sapiens (Human), this protein is Interferon lambda-4 (IFNL4).